The following is a 411-amino-acid chain: MMP alpha-(1-&gt;4)-mannosyltransferase (411 aa).

The protein belongs to the glycosyltransferase group 1 family. Glycosyltransferase 4 subfamily.

The enzyme catalyses [3-O-methyl-alpha-D-mannosyl-(1-&gt;4)](n)-3-O-methyl-D-mannose + GDP-alpha-D-mannose = alpha-D-mannosyl-(1-&gt;4)-[3-O-methyl-alpha-D-mannosyl-(1-&gt;4)](n)-3-O-methyl-D-mannose + GDP + H(+). The catalysed reaction is [3-O-methyl-alpha-D-mannosyl-(1-&gt;4)](n)-1-O,3-O-dimethyl-alpha-D-mannose + GDP-alpha-D-mannose = alpha-D-mannosyl-(1-&gt;4)-[3-O-methyl-alpha-D-mannosyl-(1-&gt;4)](n)-1-O,3-O-dimethyl-alpha-D-mannose + GDP + H(+). Its activity is regulated as follows. Activity is significantly enhanced in the presence of Mg(2+). Glycosyltransferase involved in the biosynthesis of 3-O-methylmannose polysaccharides (MMP), which are intracellular polymethylated polysaccharides implicated in the modulation of fatty acid metabolism in non-tuberculous mycobacteria. Highly specific alpha-(1-&gt;4)-mannosyltransferase that can transfer mannose units from GDP-mannose to a wide range of alpha-(1-&gt;4) oligomannosides longer than three mannoses, including all hydrolytic products of MmpH. Can use synthetic trimannosides and tetramannosides as substrates, but not mono- and disaccharides, and is significantly more active with the methylated substrates, preferring the tetramannosides over the trimannosides. The protein is MMP alpha-(1-&gt;4)-mannosyltransferase of Mycolicibacterium hassiacum (strain DSM 44199 / CIP 105218 / JCM 12690 / 3849) (Mycobacterium hassiacum).